The sequence spans 147 residues: Bis(5'-nucleosyl)-tetraphosphatase [asymmetrical] (147 aa).

A2 carries the post-translational modification N-acetylalanine. The Nudix hydrolase domain maps to 2 to 139 (ALRACGLIIF…DMKAVLQEGH (138 aa)). Residues 43 to 64 (GHVEPGESDLQTALRETQEEAG) carry the Nudix box motif.

Belongs to the Nudix hydrolase family. A divalent metal cation is required as a cofactor.

It carries out the reaction P(1),P(4)-bis(5'-guanosyl) tetraphosphate + H2O = GMP + GTP + 2 H(+). The enzyme catalyses a 5'-end CoA-ribonucleoside in mRNA + H2O = a 5'-end phospho-adenosine-phospho-ribonucleoside in mRNA + (R)-4'-phosphopantetheine + 2 H(+). It catalyses the reaction a 5'-end FAD-phospho-ribonucleoside in mRNA + H2O = a 5'-end phospho-adenosine-phospho-ribonucleoside in mRNA + FMN + 2 H(+). With respect to regulation, inhibited by fluoride ions. In terms of biological role, catalyzes the asymmetric hydrolysis of diadenosine 5',5'''-P1,P4-tetraphosphate (Ap4A) to yield AMP and ATP. Exhibits decapping activity towards FAD-capped RNAs and dpCoA-capped RNAs in vitro. This is Bis(5'-nucleosyl)-tetraphosphatase [asymmetrical] (NUDT2) from Sus scrofa (Pig).